The following is a 502-amino-acid chain: Ubiquitin-like-specific protease 1A (502 aa).

Catalysis depends on residues H393, D410, and C461.

It belongs to the peptidase C48 family.

Functionally, protease that catalyzes two essential functions in the SUMO pathway: processing of full-length SUMOs to their mature forms and deconjugation of SUMO from targeted proteins. Cleaves precursors of SUM1 and SUM2, and very inefficiently of SUM3. Seems to be the only ULP1 able to cleave SUM3 precursors. Cleaves SUMO peptides better than SUMO-conjugated proteins. This is Ubiquitin-like-specific protease 1A (ULP1A) from Arabidopsis thaliana (Mouse-ear cress).